The chain runs to 276 residues: Small ribosomal subunit protein uS3 (276 aa).

The region spanning 39–110 (IRRETMKFLK…KINIKIKEIK (72 aa)) is the KH type-2 domain.

The protein belongs to the universal ribosomal protein uS3 family. As to quaternary structure, part of the 30S ribosomal subunit. Forms a tight complex with proteins S10 and S14.

Functionally, binds the lower part of the 30S subunit head. Binds mRNA in the 70S ribosome, positioning it for translation. The polypeptide is Small ribosomal subunit protein uS3 (Borrelia recurrentis (strain A1)).